The chain runs to 266 residues: Proteasome subunit beta type-7 (266 aa).

The propeptide occupies Met-1 to Asn-33.

This sequence belongs to the peptidase T1B family. The 26S proteasome consists of a 20S proteasome core and two 19S regulatory subunits. The 20S proteasome core is composed of 28 subunits that are arranged in four stacked rings, resulting in a barrel-shaped structure. The two end rings are each formed by seven alpha subunits, and the two central rings are each formed by seven beta subunits. The catalytic chamber with the active sites is on the inside of the barrel. Interacts with CIC1.

It is found in the cytoplasm. The protein localises to the nucleus. Its function is as follows. Non-catalytic component of the proteasome which degrades poly-ubiquitinated proteins in the cytoplasm and in the nucleus. It is essential for the regulated turnover of proteins and for the removal of misfolded proteins. The proteasome is a multicatalytic proteinase complex that is characterized by its ability to cleave peptides with Arg, Phe, Tyr, Leu, and Glu adjacent to the leaving group at neutral or slightly basic pH. It has an ATP-dependent proteolytic activity. PRE3 and PRE4 are necessary for the peptidyl-glutamyl-peptide-hydrolyzing activity. The protein is Proteasome subunit beta type-7 (PRE4) of Saccharomyces cerevisiae (strain ATCC 204508 / S288c) (Baker's yeast).